We begin with the raw amino-acid sequence, 90 residues long: DNA-binding protein HU-1 (90 aa).

Position 4 is a phosphothreonine (T4).

This sequence belongs to the bacterial histone-like protein family. Homodimer.

Its function is as follows. Histone-like DNA-binding protein which is capable of wrapping DNA to stabilize it, and thus to prevent its denaturation under extreme environmental conditions. This Halalkalibacterium halodurans (strain ATCC BAA-125 / DSM 18197 / FERM 7344 / JCM 9153 / C-125) (Bacillus halodurans) protein is DNA-binding protein HU-1 (hup2).